Here is a 161-residue protein sequence, read N- to C-terminus: Arginine repressor (161 aa).

It belongs to the ArgR family.

The protein resides in the cytoplasm. It functions in the pathway amino-acid biosynthesis; L-arginine biosynthesis [regulation]. Functionally, regulates arginine biosynthesis genes. The chain is Arginine repressor from Corynebacterium aurimucosum (strain ATCC 700975 / DSM 44827 / CIP 107346 / CN-1) (Corynebacterium nigricans).